The primary structure comprises 89 residues: UPF0237 protein Cgl1544/cg1742 (89 aa).

Positions 4–82 (IMTVTGQDHT…LVIRIQSEAL (79 aa)) constitute an ACT domain.

This sequence belongs to the UPF0237 family.

This is UPF0237 protein Cgl1544/cg1742 from Corynebacterium glutamicum (strain ATCC 13032 / DSM 20300 / JCM 1318 / BCRC 11384 / CCUG 27702 / LMG 3730 / NBRC 12168 / NCIMB 10025 / NRRL B-2784 / 534).